The following is a 117-amino-acid chain: Ig kappa chain V region 12F2 (117 aa).

Residues 1–6 (LPGARC) form the signal peptide. The interval 7–29 (AYDMTQTPASVEVAVGGTVTIKC) is framework-1. An intrachain disulfide couples cysteine 29 to cysteine 86. The interval 30–40 (QASQSISTYLS) is complementarity-determining-1. The tract at residues 41 to 55 (WYQQKPGQRPKLLIY) is framework-2. A complementarity-determining-2 region spans residues 56–62 (RASTLAS). The tract at residues 63–94 (GVSSRFKGSGSGTEFTLTISGVECADAATYYC) is framework-3. The tract at residues 95 to 106 (QQGWSSSNVENV) is complementarity-determining-3. The interval 107–116 (FGGGTEVVVK) is framework-4.

The polypeptide is Ig kappa chain V region 12F2 (Oryctolagus cuniculus (Rabbit)).